The sequence spans 231 residues: tRNA (guanine-N(1)-)-methyltransferase (231 aa).

Position 112 (Gly112) interacts with S-adenosyl-L-methionine.

The protein belongs to the RNA methyltransferase TrmD family. As to quaternary structure, homodimer.

Its subcellular location is the cytoplasm. The enzyme catalyses guanosine(37) in tRNA + S-adenosyl-L-methionine = N(1)-methylguanosine(37) in tRNA + S-adenosyl-L-homocysteine + H(+). Functionally, specifically methylates guanosine-37 in various tRNAs. The chain is tRNA (guanine-N(1)-)-methyltransferase from Chlorobium chlorochromatii (strain CaD3).